Here is a 56-residue protein sequence, read N- to C-terminus: Large ribosomal subunit protein bL32 (56 aa).

The tract at residues 1-37 (MAVQQNKKSRSRRDMRRSHDALTTAAVSVDKTTGETH) is disordered. Residues 7–16 (KKSRSRRDMR) are compositionally biased toward basic residues.

It belongs to the bacterial ribosomal protein bL32 family.

In Haemophilus ducreyi (strain 35000HP / ATCC 700724), this protein is Large ribosomal subunit protein bL32.